The primary structure comprises 673 residues: Transcription initiation factor IIB (673 aa).

A TFIIB-type zinc finger spans residues 38–69; it reads EEIVCPICGSKEVVKDYERAEIVCAKCGCVIK. Residues cysteine 42, cysteine 45, cysteine 61, and cysteine 64 each coordinate Zn(2+). In terms of domain architecture, DOD-type homing endonuclease spans 238-357; it reads ILGYIIAEGY…VIFLLLQIKE (120 aa). 2 consecutive repeat copies span residues 490–573 and 584–665.

Belongs to the TFIIB family. In terms of processing, this protein undergoes a protein self splicing that involves a post-translational excision of the intervening region (intein) followed by peptide ligation.

Its function is as follows. Stabilizes TBP binding to an archaeal box-A promoter. Also responsible for recruiting RNA polymerase II to the pre-initiation complex (DNA-TBP-TFIIB). This is Transcription initiation factor IIB (tfb) from Methanocaldococcus jannaschii (strain ATCC 43067 / DSM 2661 / JAL-1 / JCM 10045 / NBRC 100440) (Methanococcus jannaschii).